Consider the following 388-residue polypeptide: Putrescine N-methyltransferase 1 (388 aa).

Polar residues-rich tracts occupy residues methionine 1–phenylalanine 14, glycine 23–threonine 39, and histidine 46–leucine 88. The tract at residues methionine 1–leucine 88 is disordered. The PABS domain maps to proline 99–threonine 336. S-adenosyl-L-methionine is bound by residues glutamine 130, glutamate 205, and aspartate 236–glycine 237. Catalysis depends on aspartate 255, which acts as the Proton acceptor. Tyrosine 324 provides a ligand contact to S-adenosyl-L-methionine.

This sequence belongs to the class I-like SAM-binding methyltransferase superfamily. Spermidine/spermine synthase family. As to expression, mainly expressed in roots.

The catalysed reaction is putrescine + S-adenosyl-L-methionine = N-methylputrescine + S-adenosyl-L-homocysteine + H(+). Its pathway is alkaloid biosynthesis; nicotine biosynthesis. Involved in the biosynthesis of pyridine alkaloid natural products, leading mainly to the production of anabasine, anatabine, nicotine and nornicotine, effective deterrents against herbivores with antiparasitic and pesticide properties (neurotoxins); nornicotine serves as the precursor in the synthesis of the carcinogen compound N'-nitrosonornicotine (NNN). Methyltransferase that mediates the conversion of putrescine to N-methylputrescine. The protein is Putrescine N-methyltransferase 1 of Nicotiana attenuata (Coyote tobacco).